Consider the following 255-residue polypeptide: Malonyl-[acyl-carrier protein] O-methyltransferase (255 aa).

The protein belongs to the methyltransferase superfamily.

It catalyses the reaction malonyl-[ACP] + S-adenosyl-L-methionine = malonyl-[ACP] methyl ester + S-adenosyl-L-homocysteine. Its pathway is cofactor biosynthesis; biotin biosynthesis. Its function is as follows. Converts the free carboxyl group of a malonyl-thioester to its methyl ester by transfer of a methyl group from S-adenosyl-L-methionine (SAM). It allows to synthesize pimeloyl-ACP via the fatty acid synthetic pathway. The sequence is that of Malonyl-[acyl-carrier protein] O-methyltransferase from Acinetobacter baylyi (strain ATCC 33305 / BD413 / ADP1).